We begin with the raw amino-acid sequence, 134 residues long: Protein NrdI (134 aa).

Belongs to the NrdI family.

Its function is as follows. Probably involved in ribonucleotide reductase function. The protein is Protein NrdI of Yersinia enterocolitica serotype O:8 / biotype 1B (strain NCTC 13174 / 8081).